The chain runs to 23 residues: IIDDTINGAITTADNIVGRIGII.

Expressed in skin glands.

It localises to the secreted. Its function is as follows. May act as an antimicrobial peptide. The sequence is that of Septenin 2d from Osteopilus septentrionalis (Cuban treefrog).